The chain runs to 396 residues: Ribosomal RNA large subunit methyltransferase I (396 aa).

The PUA domain occupies 2–81 (TVRLILAKGR…EVIDCAFFIR (80 aa)).

This sequence belongs to the methyltransferase superfamily. RlmI family.

Its subcellular location is the cytoplasm. It catalyses the reaction cytidine(1962) in 23S rRNA + S-adenosyl-L-methionine = 5-methylcytidine(1962) in 23S rRNA + S-adenosyl-L-homocysteine + H(+). Specifically methylates the cytosine at position 1962 (m5C1962) of 23S rRNA. This is Ribosomal RNA large subunit methyltransferase I from Yersinia pestis bv. Antiqua (strain Antiqua).